The following is a 440-amino-acid chain: MCRQNCRAKSSPEEVISTDENLLIYCKPVRLYNIFHLRSLGNPSFLPRCLNYKIGAKRKRKSRSTGMVVFNYKDCNNTLQRTEVREDCSCPFCSMLCGSFKGLQFHLNSSHDLFEFEFKLLEEYQTVNVSVKLNSFIFEEEGSDDDKFEPFSLCSKPRKRRQRGGRNNTRRLKVCFLPLDSPSLANGTENGIALLNDGNRGLGYPEATELAGQFEMTSNIPPAIAHSSLDAGAKVILTTEAVVPATKTRKLSAERSEARSHLLLQKRQFYHSHRVQPMALEQVMSDRDSEDEVDDDVADFEDRQMLDDFVDVNKDEKQFMHLWNSFVRKQRVIADGHISWACEVFSRFYEKELHCYSSLFWCWRLFLIKLWNHGLVDSATINNCNTILENCRNTSVTNNNNNSVDHPSDSNTNNNNIVDHPNDIKNKNNVDNKDNNSRDK.

A C2H2-type zinc finger spans residues 86–111; the sequence is EDCSCPFCSMLCGSFKGLQFHLNSSH. The Nuclear localization signal motif lies at 156–163; that stretch reads KPRKRRQR. Positions 267 to 345 are VEFS-box; the sequence is RQFYHSHRVQ…GHISWACEVF (79 aa). The tract at residues 398–440 is disordered; sequence NNNNNSVDHPSDSNTNNNNIVDHPNDIKNKNNVDNKDNNSRDK. Over residues 420–440 the composition is skewed to basic and acidic residues; that stretch reads HPNDIKNKNNVDNKDNNSRDK.

Belongs to the VEFS (VRN2-EMF2-FIS2-SU(Z)12) family. Probable component of a PcG complex. In plants, PcG complexes are probably composed of a member of the EZ family (CLF or MEA), FIE, and a member of the VEFS family (FIS2, VRN2 or EMF2). Component of the plant homeodomain / polycomb repressive complex 2 (PHD-PRC2) large complex during prolonged cold, composed of core PRC2 components (VRN2, EZA1, FIE and MSI1), and three related PHD finger proteins (VIL1, VIL2 and VIN3) that mediates histone H3 trimethylation on 'Lys-27' (H3K27me3). Binds to ALP1. In terms of tissue distribution, weakly expressed. Expressed both during, and in the absence of vernalization.

The protein resides in the nucleus. In terms of biological role, polycomb group (PcG) protein. Plays a central role in vernalization by maintaining repressed the homeotic gene FLC, a floral repressor, after a cold treatment. PcG proteins act by forming multiprotein complexes, which are required to maintain the transcriptionally repressive state of homeotic genes throughout development. PcG proteins are not required to initiate repression, but to maintain it during later stages of development. They probably act via the methylation of histones, rendering chromatin heritably changed in its expressibility. Associates constitutively along the whole FLC locus. This is Polycomb group protein VERNALIZATION 2 (VRN2) from Arabidopsis thaliana (Mouse-ear cress).